Here is a 194-residue protein sequence, read N- to C-terminus: Holliday junction branch migration complex subunit RuvA (194 aa).

Residues 1–64 are domain I; that stretch reads MIGRLRGVLT…DDSAALYGFL (64 aa). The interval 65-140 is domain II; that stretch reads SESERRLFRH…RAADFNNGIS (76 aa). A flexible linker region spans residues 140-144; it reads STSGK. The domain III stretch occupies residues 145-194; that stretch reads LNLDTVSEAALALQQLGYKPAEAARMARDAGTESDDVASVIKKALQAALR.

The protein belongs to the RuvA family. Homotetramer. Forms an RuvA(8)-RuvB(12)-Holliday junction (HJ) complex. HJ DNA is sandwiched between 2 RuvA tetramers; dsDNA enters through RuvA and exits via RuvB. An RuvB hexamer assembles on each DNA strand where it exits the tetramer. Each RuvB hexamer is contacted by two RuvA subunits (via domain III) on 2 adjacent RuvB subunits; this complex drives branch migration. In the full resolvosome a probable DNA-RuvA(4)-RuvB(12)-RuvC(2) complex forms which resolves the HJ.

The protein resides in the cytoplasm. The RuvA-RuvB-RuvC complex processes Holliday junction (HJ) DNA during genetic recombination and DNA repair, while the RuvA-RuvB complex plays an important role in the rescue of blocked DNA replication forks via replication fork reversal (RFR). RuvA specifically binds to HJ cruciform DNA, conferring on it an open structure. The RuvB hexamer acts as an ATP-dependent pump, pulling dsDNA into and through the RuvAB complex. HJ branch migration allows RuvC to scan DNA until it finds its consensus sequence, where it cleaves and resolves the cruciform DNA. This is Holliday junction branch migration complex subunit RuvA from Xylella fastidiosa (strain 9a5c).